Reading from the N-terminus, the 233-residue chain is Large ribosomal subunit protein uL1 (233 aa).

The protein belongs to the universal ribosomal protein uL1 family. Part of the 50S ribosomal subunit.

Binds directly to 23S rRNA. The L1 stalk is quite mobile in the ribosome, and is involved in E site tRNA release. In terms of biological role, protein L1 is also a translational repressor protein, it controls the translation of the L11 operon by binding to its mRNA. The protein is Large ribosomal subunit protein uL1 of Aeromonas salmonicida (strain A449).